The primary structure comprises 688 residues: Translation initiation factor IF-2 (688 aa).

The interval G53–P101 is disordered. A compositionally biased stretch (basic residues) spans R71–G83. The region spanning E190–K359 is the tr-type G domain. Residues G199–T206 form a G1 region. G199–T206 is a binding site for GTP. A G2 region spans residues G224–H228. Residues D245–G248 are G3. Residues D245–H249 and N299–D302 each bind GTP. Residues N299 to D302 form a G4 region. Residues S335–I337 are G5.

It belongs to the TRAFAC class translation factor GTPase superfamily. Classic translation factor GTPase family. IF-2 subfamily.

Its subcellular location is the cytoplasm. In terms of biological role, one of the essential components for the initiation of protein synthesis. Protects formylmethionyl-tRNA from spontaneous hydrolysis and promotes its binding to the 30S ribosomal subunits. Also involved in the hydrolysis of GTP during the formation of the 70S ribosomal complex. The polypeptide is Translation initiation factor IF-2 (Bacillus mycoides (strain KBAB4) (Bacillus weihenstephanensis)).